We begin with the raw amino-acid sequence, 940 residues long: Pentatricopeptide repeat-containing protein At5g14770, mitochondrial (940 aa).

The transit peptide at Met-1–Phe-24 directs the protein to the mitochondrion. PPR repeat units follow at residues Tyr-59–Pro-93, Asp-94–Pro-129, Asp-130–Ile-161, Asp-162–Pro-196, Asp-197–Thr-231, Asn-241–Pro-259, Asp-260–Pro-294, Asn-295–Val-329, Asp-330–Pro-364, Asn-365–Pro-399, Asn-400–Pro-434, Asn-435–Glu-469, Asn-470–Leu-504, Asp-505–Trp-539, Asp-540–Pro-573, Asp-574–Pro-608, Ser-609–Pro-643, Asn-644–Leu-678, Ser-679–Pro-713, Asp-714–Pro-748, Asn-749–Pro-783, Asp-784–Pro-818, Lys-819–Pro-853, and Asn-854–Lys-891.

Belongs to the PPR family. P subfamily.

Its subcellular location is the mitochondrion. This is Pentatricopeptide repeat-containing protein At5g14770, mitochondrial from Arabidopsis thaliana (Mouse-ear cress).